Reading from the N-terminus, the 89-residue chain is Pigment-dispersing hormone peptides (89 aa).

Residues 1–22 (MTAMAVSGKLLTALVLSTYILG) form the signal peptide. The residue at position 86 (alanine 86) is an Alanine amide.

It belongs to the arthropod PDH family.

It is found in the secreted. Capable of inducing pigment dispersion in the chromatophores of the fiddler crab Uca pugilator. This is Pigment-dispersing hormone peptides from Romalea microptera (Eastern lubber grasshopper).